The sequence spans 166 residues: MNRVFLFGKLSFDPNKLQTRTNNIGASFSLACIDSSGFNDSKSYIRITAWGKVASFVLTLKPGDSVFVEGRLSTYKMNNRSDDPNSKATYALQVIADKVYRPDEENSLEQPVDKATVIDSPFLAAKTNATENELAQAFPISLDDEDDDINPILNNDSQLEEESDDE.

The SSB domain occupies 1 to 103 (MNRVFLFGKL…VIADKVYRPD (103 aa)). A disordered region spans residues 140 to 166 (ISLDDEDDDINPILNNDSQLEEESDDE).

As to quaternary structure, homotetramer.

In Mycoplasma pneumoniae (strain ATCC 29342 / M129 / Subtype 1) (Mycoplasmoides pneumoniae), this protein is Single-stranded DNA-binding protein (ssb).